Reading from the N-terminus, the 247-residue chain is ATP synthase subunit a, chloroplastic (247 aa).

Transmembrane regions (helical) follow at residues 38-58, 95-115, 134-154, 199-219, and 220-240; these read QVLI…TLAV, VPFI…GALL, INTT…AGIS, LVVV…VMFL, and GLFT…AYIG.

This sequence belongs to the ATPase A chain family. As to quaternary structure, F-type ATPases have 2 components, CF(1) - the catalytic core - and CF(0) - the membrane proton channel. CF(1) has five subunits: alpha(3), beta(3), gamma(1), delta(1), epsilon(1). CF(0) has four main subunits: a, b, b' and c.

The protein resides in the plastid. It localises to the chloroplast thylakoid membrane. In terms of biological role, key component of the proton channel; it plays a direct role in the translocation of protons across the membrane. This chain is ATP synthase subunit a, chloroplastic, found in Daucus carota (Wild carrot).